The following is a 347-amino-acid chain: S-adenosylmethionine:tRNA ribosyltransferase-isomerase (347 aa).

The protein belongs to the QueA family. As to quaternary structure, monomer.

The protein localises to the cytoplasm. It catalyses the reaction 7-aminomethyl-7-carbaguanosine(34) in tRNA + S-adenosyl-L-methionine = epoxyqueuosine(34) in tRNA + adenine + L-methionine + 2 H(+). The protein operates within tRNA modification; tRNA-queuosine biosynthesis. In terms of biological role, transfers and isomerizes the ribose moiety from AdoMet to the 7-aminomethyl group of 7-deazaguanine (preQ1-tRNA) to give epoxyqueuosine (oQ-tRNA). The protein is S-adenosylmethionine:tRNA ribosyltransferase-isomerase of Methylococcus capsulatus (strain ATCC 33009 / NCIMB 11132 / Bath).